Here is a 318-residue protein sequence, read N- to C-terminus: Thymidylate synthase (318 aa).

DUMP is bound by residues arginine 25 and 180 to 181 (RR). The active-site Nucleophile is the cysteine 200. Residues 220–223 (RSGD), asparagine 231, and 261–263 (HIY) contribute to the dUMP site. Residue aspartate 223 participates in (6R)-5,10-methylene-5,6,7,8-tetrahydrofolate binding. Alanine 317 serves as a coordination point for (6R)-5,10-methylene-5,6,7,8-tetrahydrofolate.

Belongs to the thymidylate synthase family. Bacterial-type ThyA subfamily. Homodimer.

Its subcellular location is the cytoplasm. The enzyme catalyses dUMP + (6R)-5,10-methylene-5,6,7,8-tetrahydrofolate = 7,8-dihydrofolate + dTMP. It functions in the pathway pyrimidine metabolism; dTTP biosynthesis. Its function is as follows. Catalyzes the reductive methylation of 2'-deoxyuridine-5'-monophosphate (dUMP) to 2'-deoxythymidine-5'-monophosphate (dTMP) while utilizing 5,10-methylenetetrahydrofolate (mTHF) as the methyl donor and reductant in the reaction, yielding dihydrofolate (DHF) as a by-product. This enzymatic reaction provides an intracellular de novo source of dTMP, an essential precursor for DNA biosynthesis. This Lactobacillus delbrueckii subsp. bulgaricus (strain ATCC BAA-365 / Lb-18) protein is Thymidylate synthase.